We begin with the raw amino-acid sequence, 209 residues long: Ribosomal RNA large subunit methyltransferase E (209 aa).

Positions 63, 65, 83, 99, and 124 each coordinate S-adenosyl-L-methionine. The active-site Proton acceptor is lysine 164.

It belongs to the class I-like SAM-binding methyltransferase superfamily. RNA methyltransferase RlmE family.

The protein resides in the cytoplasm. It carries out the reaction uridine(2552) in 23S rRNA + S-adenosyl-L-methionine = 2'-O-methyluridine(2552) in 23S rRNA + S-adenosyl-L-homocysteine + H(+). Functionally, specifically methylates the uridine in position 2552 of 23S rRNA at the 2'-O position of the ribose in the fully assembled 50S ribosomal subunit. The polypeptide is Ribosomal RNA large subunit methyltransferase E (Shewanella denitrificans (strain OS217 / ATCC BAA-1090 / DSM 15013)).